Reading from the N-terminus, the 95-residue chain is Large ribosomal subunit protein uL23 (95 aa).

Belongs to the universal ribosomal protein uL23 family. Part of the 50S ribosomal subunit. Contacts protein L29, and trigger factor when it is bound to the ribosome.

Its function is as follows. One of the early assembly proteins it binds 23S rRNA. One of the proteins that surrounds the polypeptide exit tunnel on the outside of the ribosome. Forms the main docking site for trigger factor binding to the ribosome. The chain is Large ribosomal subunit protein uL23 from Desulforudis audaxviator (strain MP104C).